Consider the following 1434-residue polypeptide: Probable ATP-dependent RNA helicase spindle-E (1434 aa).

Residues 126–295 (INAINENPVV…FANESSAPPV (170 aa)) form the Helicase ATP-binding domain. Position 139–146 (139–146 (GETGCGKT)) interacts with ATP. The DEAH box signature appears at 241 to 244 (DEVH). Positions 356–527 (TGKSYNQSLR…NCVLKAKELK (172 aa)) constitute a Helicase C-terminal domain. One can recognise a Tudor domain in the interval 936–999 (AGAITKGLML…RLMSQDLLRH (64 aa)).

This sequence belongs to the DEAD box helicase family. DEAH subfamily.

The protein localises to the cytoplasm. It carries out the reaction ATP + H2O = ADP + phosphate + H(+). Its function is as follows. Probable ATP-binding RNA helicase which plays a central role during spermatogenesis and oogenesis by repressing transposable elements and preventing their mobilization, which is essential for the germline integrity. Acts via the piRNA metabolic process, which mediates the repression of transposable elements during meiosis by forming complexes composed of piRNAs and Piwi and govern the methylation and subsequent repression of transposons. Involved in the repression of LTR retrotransposon copia. Also involved in telomere regulation by repressing specialized telomeric retroelements HeT-A, TAHRE, and TART; Drosophila telomeres being maintained by transposition of specialized telomeric retroelements. Involved in telomeric trans-silencing, a repression mechanism by which a transposon or a transgene inserted in subtelomeric heterochromatin has the capacity to repress in trans in the female germline, a homologous transposon, or transgene located in euchromatin. Involved in the repression of testis-expressed Stellate genes by the homologous Su(Ste) repeats. Required for anteroposterior and dorsoventral axis formation during oogenesis. In Drosophila persimilis (Fruit fly), this protein is Probable ATP-dependent RNA helicase spindle-E (spn-E).